A 264-amino-acid polypeptide reads, in one-letter code: Signal peptidase I (264 aa).

At Met-1 to Ser-18 the chain is on the cytoplasmic side. A helical transmembrane segment spans residues Phe-19–Val-39. The Extracellular portion of the chain corresponds to Pro-40 to Glu-264. Residues Ser-43 and Lys-106 contribute to the active site.

This sequence belongs to the peptidase S26 family.

Its subcellular location is the cell membrane. The enzyme catalyses Cleavage of hydrophobic, N-terminal signal or leader sequences from secreted and periplasmic proteins.. The sequence is that of Signal peptidase I (lepB) from Rickettsia prowazekii (strain Madrid E).